We begin with the raw amino-acid sequence, 347 residues long: S-adenosylmethionine decarboxylase proenzyme (347 aa).

Residues Glu-10 and Glu-13 contribute to the active site. The active-site Schiff-base intermediate with substrate; via pyruvic acid is Ser-66. The residue at position 66 (Ser-66) is a Pyruvic acid (Ser); by autocatalysis. Cys-80 acts as the Proton donor; for catalytic activity in catalysis. Active-site proton acceptor; for processing activity residues include Ser-237 and His-251.

This sequence belongs to the eukaryotic AdoMetDC family. Pyruvate serves as cofactor. Is synthesized initially as an inactive proenzyme. Formation of the active enzyme involves a self-maturation process in which the active site pyruvoyl group is generated from an internal serine residue via an autocatalytic post-translational modification. Two non-identical subunits are generated from the proenzyme in this reaction, and the pyruvate is formed at the N-terminus of the alpha chain, which is derived from the carboxyl end of the proenzyme. The post-translation cleavage follows an unusual pathway, termed non-hydrolytic serinolysis, in which the side chain hydroxyl group of the serine supplies its oxygen atom to form the C-terminus of the beta chain, while the remainder of the serine residue undergoes an oxidative deamination to produce ammonia and the pyruvoyl group blocking the N-terminus of the alpha chain.

It carries out the reaction S-adenosyl-L-methionine + H(+) = S-adenosyl 3-(methylsulfanyl)propylamine + CO2. Its pathway is amine and polyamine biosynthesis; S-adenosylmethioninamine biosynthesis; S-adenosylmethioninamine from S-adenosyl-L-methionine: step 1/1. The polypeptide is S-adenosylmethionine decarboxylase proenzyme (SamDC) (Drosophila melanogaster (Fruit fly)).